The primary structure comprises 537 residues: Glucans biosynthesis protein D (537 aa).

The tat-type signal signal peptide spans 1–30 (MLMYRRDFLKSVTAAWVAFGLPNPLGGAFA).

The protein belongs to the OpgD/OpgG family. Predicted to be exported by the Tat system. The position of the signal peptide cleavage has not been experimentally proven.

The protein resides in the periplasm. Its pathway is glycan metabolism; osmoregulated periplasmic glucan (OPG) biosynthesis. Its function is as follows. Probably involved in the control of the structural glucose backbone of osmoregulated periplasmic glucans (OPGs). The polypeptide is Glucans biosynthesis protein D (Xylella fastidiosa (strain M12)).